The primary structure comprises 114 residues: MSTAASSRMRVFSGRSTRTYPRAVPTYHCQPCRRVPSRPCRPVRALDTASKHARSNRATAAQKEKQGHGGSAQGARNPASHRHLHQRTRGDQVPSEPPSRPRKDHASQSPDTAY.

A disordered region spans residues 1 to 114 (MSTAASSRMR…HASQSPDTAY (114 aa)). Positions 32–43 (CRRVPSRPCRPV) are enriched in low complexity.

This is an uncharacterized protein from Human adenovirus B serotype 7 (HAdV-7).